We begin with the raw amino-acid sequence, 309 residues long: Haloalkane dehalogenase (309 aa).

Positions 37 to 148 (PTVLFLHGNP…FERWEDFHQR (112 aa)) constitute an AB hydrolase-1 domain. The Nucleophile role is filled by aspartate 110. The Proton donor role is filled by glutamate 134. Histidine 278 acts as the Proton acceptor in catalysis.

Belongs to the haloalkane dehalogenase family. Type 2 subfamily. As to quaternary structure, monomer.

It carries out the reaction 1-haloalkane + H2O = a halide anion + a primary alcohol + H(+). Its function is as follows. Catalyzes hydrolytic cleavage of carbon-halogen bonds in halogenated aliphatic compounds, leading to the formation of the corresponding primary alcohols, halide ions and protons. The chain is Haloalkane dehalogenase from Mesorhizobium japonicum (strain LMG 29417 / CECT 9101 / MAFF 303099) (Mesorhizobium loti (strain MAFF 303099)).